Reading from the N-terminus, the 186-residue chain is FMN-dependent NADH:quinone oxidoreductase 1 (186 aa).

FMN is bound by residues 15 to 17 (SVS) and 81 to 84 (MYNF).

It belongs to the azoreductase type 1 family. In terms of assembly, homodimer. FMN serves as cofactor.

The catalysed reaction is 2 a quinone + NADH + H(+) = 2 a 1,4-benzosemiquinone + NAD(+). It carries out the reaction N,N-dimethyl-1,4-phenylenediamine + anthranilate + 2 NAD(+) = 2-(4-dimethylaminophenyl)diazenylbenzoate + 2 NADH + 2 H(+). Its function is as follows. Quinone reductase that provides resistance to thiol-specific stress caused by electrophilic quinones. Functionally, also exhibits azoreductase activity. Catalyzes the reductive cleavage of the azo bond in aromatic azo compounds to the corresponding amines. This Idiomarina loihiensis (strain ATCC BAA-735 / DSM 15497 / L2-TR) protein is FMN-dependent NADH:quinone oxidoreductase 1.